A 1069-amino-acid chain; its full sequence is DNA annealing helicase and endonuclease ZRANB3 (1069 aa).

The Helicase ATP-binding domain occupies 46-208 (VFALRRDGRC…FMQIEALFPQ (163 aa)). Residues 46 to 481 (VFALRRDGRC…GRKEKLQATE (436 aa)) form a DNA annealing helicase activity region. 59-66 (DEMGLGKT) contacts ATP. The short motif at 157–160 (DESH) is the DEAH box element. A Helicase C-terminal domain is found at 325-485 (AVKDYIKMLL…KLQATEDDKE (161 aa)). Residues 518-525 (QHDIRSFF) carry the PIP-box motif. A RanBP2-type zinc finger spans residues 617–646 (PEKGWQCGFCTFLNNPGLPYCEMCENPRSR). A disordered region spans residues 648 to 720 (AGRNHLQDNN…PEIGQLNNSG (73 aa)). 2 stretches are compositionally biased toward basic and acidic residues: residues 652–661 (HLQDNNKNDE) and 677–707 (ECER…EDRL). In terms of domain architecture, HNH spans 1001–1041 (PGEGHFWQVDHIRPVYEGGGQCSLDNLQTLCTVCHKERTAQ). An endonuclease activity region spans residues 1001–1069 (PGEGHFWQVD…SDITRFLVKK (69 aa)). Positions 1064-1068 (RFLVK) match the APIM motif motif.

This sequence belongs to the SNF2/RAD54 helicase family. As to quaternary structure, interacts (via PIP-box and RanBP2-type zinc finger) with PCNA (when PCNA is polyubiquitinated via 'Lys-63'-linked polyubiquitin).

The protein resides in the nucleus. The protein localises to the chromosome. DNA annealing helicase and endonuclease required to maintain genome stability at stalled or collapsed replication forks by facilitating fork restart and limiting inappropriate recombination that could occur during template switching events. Recruited to the sites of stalled DNA replication by polyubiquitinated PCNA and acts as a structure-specific endonuclease that cleaves the replication fork D-loop intermediate, generating an accessible 3'-OH group in the template of the leading strand, which is amenable to extension by DNA polymerase. In addition to endonuclease activity, also catalyzes the fork regression via annealing helicase activity in order to prevent disintegration of the replication fork and the formation of double-strand breaks. This Mus musculus (Mouse) protein is DNA annealing helicase and endonuclease ZRANB3 (Zranb3).